Consider the following 172-residue polypeptide: MISPLFFASEGGFGLNLDLFDANIVNLAIVIFGLYKFLPPFIGGILERRRVAIMADLQDSEDRLLKATEALAAAKKDLAAAHQKAEQIREDCKLRAEAIRLDSEKRTVEEMARVKQGATADLNAEASRASAQLRREAARMAIENALSALPGKLNTEAQSKLVSQSIKNLGEA.

The chain crosses the membrane as a helical span at residues L27–E47.

The protein belongs to the ATPase B chain family. F-type ATPases have 2 components, F(1) - the catalytic core - and F(0) - the membrane proton channel. F(1) has five subunits: alpha(3), beta(3), gamma(1), delta(1), epsilon(1). F(0) has four main subunits: a(1), b(1), b'(1) and c(10-14). The alpha and beta chains form an alternating ring which encloses part of the gamma chain. F(1) is attached to F(0) by a central stalk formed by the gamma and epsilon chains, while a peripheral stalk is formed by the delta, b and b' chains.

Its subcellular location is the cellular thylakoid membrane. Its function is as follows. F(1)F(0) ATP synthase produces ATP from ADP in the presence of a proton or sodium gradient. F-type ATPases consist of two structural domains, F(1) containing the extramembraneous catalytic core and F(0) containing the membrane proton channel, linked together by a central stalk and a peripheral stalk. During catalysis, ATP synthesis in the catalytic domain of F(1) is coupled via a rotary mechanism of the central stalk subunits to proton translocation. In terms of biological role, component of the F(0) channel, it forms part of the peripheral stalk, linking F(1) to F(0). This Prochlorococcus marinus (strain MIT 9313) protein is ATP synthase subunit b.